Here is a 137-residue protein sequence, read N- to C-terminus: Acidic phospholipase A2 CC-PLA2-1 (137 aa).

Positions 1 to 16 (MRTLWIVAVWLMGVEG) are cleaved as a signal peptide. Cystine bridges form between Cys-42–Cys-130, Cys-44–Cys-60, Cys-59–Cys-110, Cys-65–Cys-137, Cys-66–Cys-103, Cys-73–Cys-96, and Cys-90–Cys-101. Ca(2+) is bound by residues Tyr-43, Gly-45, and Gly-47. Residue His-63 is part of the active site. Residue Asp-64 participates in Ca(2+) binding. Residue Asp-104 is part of the active site.

It belongs to the phospholipase A2 family. Group II subfamily. D49 sub-subfamily. It depends on Ca(2+) as a cofactor. Post-translationally, glycosylated (2.5%). Expressed by the venom gland.

The protein resides in the secreted. The enzyme catalyses a 1,2-diacyl-sn-glycero-3-phosphocholine + H2O = a 1-acyl-sn-glycero-3-phosphocholine + a fatty acid + H(+). Its function is as follows. Snake venom phospholipase A2 (PLA2) that inhibits blood coagulation and platelet aggregation induced by ADP and arachidonic acid. Inhibits tumor cell adhesion and migration in a dose-dependent manner. Abolishes the attachment of human brain microvascular endothelial cells (HBMEC) to fibrinogen (IC(50)=0.12 uM) and dramatically reduces its adhesion to fibronectin (IC(50)=0.12 uM), whereas no effect is observed on type I collagen, vitronectin or laminin 1. Also blocks the cell migration toward fibronectin and fibrinogen. These effects are not dependent of the catalytic activity, but are mediated by alpha-5/beta-1 (ITGA5/ITGB1) and alpha-v-containing (ITGAV) integrins. Also shows anti-angiogenic activity in chicken chorioallantoix membrane assay. Has a relatively high enzymatic activity. PLA2 catalyzes the calcium-dependent hydrolysis of the 2-acyl groups in 3-sn-phosphoglycerides. This chain is Acidic phospholipase A2 CC-PLA2-1, found in Cerastes cerastes (Horned desert viper).